The primary structure comprises 443 residues: Autophagy-related protein 13 homolog (443 aa).

Disordered stretches follow at residues 232–283 and 308–333; these read AKKR…EEDH and ANGTKKNSSSTCLNSPKSTPEDKEPT. The segment covering 240–253 has biased composition (polar residues); sequence SVESATSAGSSTSR. The span at 268–283 shows a compositional bias: basic and acidic residues; that stretch reads EDSRHSDVQNSYEEDH. The segment covering 308 to 325 has biased composition (polar residues); sequence ANGTKKNSSSTCLNSPKS.

The protein belongs to the ATG13 family. Metazoan subfamily. As to quaternary structure, interacts with unc-51 (via C-terminus). Interacts with lgg-1; the interaction is direct.

The protein localises to the cytoplasm. The protein resides in the cytosol. Its subcellular location is the preautophagosomal structure. It is found in the perikaryon. It localises to the cell projection. The protein localises to the axon. Its function is as follows. Component of the unc-51/atg-13 complex required for autophagosome formation. Required for the degradation of germ cell specific P-granule components such as sepa-1 by autophagy in somatic cells. This ensures exclusive localization of the P-granules in germ cells. May function downstream of the let-363 (Tor) signaling pathway to mediate sepa-1 degradation. Plays a role in survival during limited food availability. This Caenorhabditis elegans protein is Autophagy-related protein 13 homolog.